A 199-amino-acid chain; its full sequence is Recombination protein RecR (199 aa).

The C4-type zinc finger occupies 58 to 73 (CSACGNVDTQDPCAIC). Residues 81 to 176 (HILCIVEEVG…SVSRLAHGVP (96 aa)) form the Toprim domain.

It belongs to the RecR family.

Functionally, may play a role in DNA repair. It seems to be involved in an RecBC-independent recombinational process of DNA repair. It may act with RecF and RecO. The sequence is that of Recombination protein RecR from Parvibaculum lavamentivorans (strain DS-1 / DSM 13023 / NCIMB 13966).